Consider the following 68-residue polypeptide: Large ribosomal subunit protein uL29 (68 aa).

Belongs to the universal ribosomal protein uL29 family.

The polypeptide is Large ribosomal subunit protein uL29 (rpl29) (Pyrococcus horikoshii (strain ATCC 700860 / DSM 12428 / JCM 9974 / NBRC 100139 / OT-3)).